The primary structure comprises 716 residues: ATP-dependent DNA helicase DinG (716 aa).

Residues 17–294 (ALQEQIPDFI…TCMEQFRPKT (278 aa)) enclose the Helicase ATP-binding domain. An ATP-binding site is contributed by 54-61 (APTGVGKT). A [4Fe-4S] cluster-binding site is contributed by Cys-120. A DEAH box motif is present at residues 131–134 (EPTQ). Residues Cys-194, Cys-199, and Cys-205 each coordinate [4Fe-4S] cluster. The short motif at 248-251 (DEGH) is the DEAH box element. Positions 487-698 (ALDSPFNHCE…VFPIEQPEVP (212 aa)) constitute a Helicase C-terminal domain.

Belongs to the helicase family. DinG subfamily. Type 1 sub-subfamily. Requires [4Fe-4S] cluster as cofactor.

The catalysed reaction is Couples ATP hydrolysis with the unwinding of duplex DNA at the replication fork by translocating in the 5'-3' direction. This creates two antiparallel DNA single strands (ssDNA). The leading ssDNA polymer is the template for DNA polymerase III holoenzyme which synthesizes a continuous strand.. It catalyses the reaction ATP + H2O = ADP + phosphate + H(+). Functionally, DNA-dependent ATPase and 5'-3' DNA helicase. Unwinds D-loops, R-loops, forked DNA and G-quadruplex DNA. The protein is ATP-dependent DNA helicase DinG of Shigella flexneri.